Here is a 195-residue protein sequence, read N- to C-terminus: Large ribosomal subunit protein bL17 (195 aa).

A disordered region spans residues 132–195 (ARGTRFAARK…TEAKDTKPES (64 aa)). The segment covering 159-186 (PTAAAVAAEAQAEQPTAEAVAADDAATT) has biased composition (low complexity).

Belongs to the bacterial ribosomal protein bL17 family. Part of the 50S ribosomal subunit. Contacts protein L32.

The protein is Large ribosomal subunit protein bL17 of Parafrankia sp. (strain EAN1pec).